The primary structure comprises 129 residues: UPF0212 protein Mbar_A2902 (129 aa).

It belongs to the UPF0212 family.

The chain is UPF0212 protein Mbar_A2902 from Methanosarcina barkeri (strain Fusaro / DSM 804).